Here is a 2493-residue protein sequence, read N- to C-terminus: U3 small nucleolar RNA-associated protein 20 (2493 aa).

16 HEAT repeats span residues 227-264, 495-532, 576-613, 845-882, 1176-1214, 1216-1252, 1342-1380, 1393-1430, 1480-1520, 1522-1558, 1588-1625, 1630-1667, 1890-1927, 1953-1992, 2120-2157, and 2358-2397; these read NLYEGLLILFTESMTSTQETLHSKAKAIMSVLLHEALT, EIIIPLLERIFSTFASPDNFTKDMVGTLLKIYRKEDDA, SHYPSLLLSLTDNFMLPDGKIRYETLELMKTLMILQGM, YSATELHDHLMVLLGSRNTDVQKLALDALLAYKNPTLN, TSCLKILPSLYVKLSDSNSISTFLNLLVSITEMGFIQDD, VRSRLISSLISILKGKLKKLQENDTQKILKILKLIVF, LEWLPLLFTFLHFINNKEELALRTNASHAIMKFIDFINE, MLKDILLPNIRIGLRDSLEEVQSEYVSVLSYMVKNTKY, SISH…HMSW, QYKALLRRYISMLKTKPNQMKQAVQLIVQLSVPLRET, QELYPTLSKILGTRDDETIIERMPIAEALVNIVLGLTN, NFLPSILTNICQVLRSKSEELRDAVRVTLGKISIILGA, SHLEGFIPFLRDSLLSENEGVVISTLRILITLIRLDFS, SELCQMGLKFLSAFIRHTDSTLKDTALSYVLGRVLPDLNE, EMASVLISTMLPKLENKDLEIVEKYIAAWLKQVDNASF, and KACIQLLALLVQVLDEDEVIAEGEKILLPLYGYLETYYSR. The segment at 2457-2493 is disordered; it reads QISADKKLRKHARSREKRKHEKDENGYYQRRNKRKRA. Basic residues predominate over residues 2463–2476; sequence KLRKHARSREKRKH.

The protein belongs to the UTP20 family. In terms of assembly, interacts with snoRNA U3. Interacts with MPP10. Component of the ribosomal small subunit (SSU) processome composed of at least 40 protein subunits and snoRNA U3.

Its subcellular location is the cytoplasm. The protein localises to the nucleus. It is found in the nucleolus. Functionally, involved in nucleolar processing of pre-18S ribosomal RNA and ribosome assembly. This is U3 small nucleolar RNA-associated protein 20 (UTP20) from Saccharomyces cerevisiae (strain ATCC 204508 / S288c) (Baker's yeast).